The following is a 93-amino-acid chain: Large ribosomal subunit protein uL23cz/uL23cy (93 aa).

It belongs to the universal ribosomal protein uL23 family. As to quaternary structure, part of the 50S ribosomal subunit.

The protein resides in the plastid. It is found in the chloroplast. Its function is as follows. Binds to 23S rRNA. The polypeptide is Large ribosomal subunit protein uL23cz/uL23cy (rpl23-A) (Platanus occidentalis (Sycamore)).